The chain runs to 594 residues: Glutamate decarboxylase 1 (594 aa).

The segment covering 1-13 (MASSTPSSSATSS) has biased composition (low complexity). Residues 1–23 (MASSTPSSSATSSNAGADPNTTN) form a disordered region. Ser-78 is modified (phosphoserine). 190-192 (QLS) provides a ligand contact to 4-aminobutanoate. Lys-405 bears the N6-(pyridoxal phosphate)lysine mark. Arg-567 contributes to the 4-aminobutanoate binding site.

It belongs to the group II decarboxylase family. Homodimer. Requires pyridoxal 5'-phosphate as cofactor.

It catalyses the reaction L-glutamate + H(+) = 4-aminobutanoate + CO2. Its function is as follows. Catalyzes the synthesis of the inhibitory neurotransmitter gamma-aminobutyric acid (GABA) with pyridoxal 5'-phosphate as cofactor. This Bos taurus (Bovine) protein is Glutamate decarboxylase 1 (GAD1).